Reading from the N-terminus, the 126-residue chain is Aspartate 1-decarboxylase (126 aa).

The active-site Schiff-base intermediate with substrate; via pyruvic acid is the S25. At S25 the chain carries Pyruvic acid (Ser). T57 lines the substrate pocket. The active-site Proton donor is Y58. Substrate is bound at residue 73–75 (GSA).

This sequence belongs to the PanD family. In terms of assembly, heterooctamer of four alpha and four beta subunits. Pyruvate serves as cofactor. In terms of processing, is synthesized initially as an inactive proenzyme, which is activated by self-cleavage at a specific serine bond to produce a beta-subunit with a hydroxyl group at its C-terminus and an alpha-subunit with a pyruvoyl group at its N-terminus.

It localises to the cytoplasm. The enzyme catalyses L-aspartate + H(+) = beta-alanine + CO2. It functions in the pathway cofactor biosynthesis; (R)-pantothenate biosynthesis; beta-alanine from L-aspartate: step 1/1. In terms of biological role, catalyzes the pyruvoyl-dependent decarboxylation of aspartate to produce beta-alanine. This chain is Aspartate 1-decarboxylase, found in Chromobacterium violaceum (strain ATCC 12472 / DSM 30191 / JCM 1249 / CCUG 213 / NBRC 12614 / NCIMB 9131 / NCTC 9757 / MK).